The primary structure comprises 480 residues: Siroheme synthase 1 (480 aa).

Positions 1–203 (MNYLPIFADL…GQLEQAEGEL (203 aa)) are precorrin-2 dehydrogenase /sirohydrochlorin ferrochelatase. Residues 22–23 (EV) and 43–44 (LA) contribute to the NAD(+) site. Ser-128 is modified (phosphoserine). A uroporphyrinogen-III C-methyltransferase region spans residues 222–480 (GEVALVGAGP…DSRPAVVNLA (259 aa)). Pro-231 is an S-adenosyl-L-methionine binding site. The active-site Proton acceptor is the Asp-254. Lys-276 serves as the catalytic Proton donor. S-adenosyl-L-methionine contacts are provided by residues 307–309 (GGD), Ile-312, 337–338 (TA), Met-389, and Gly-418.

The protein in the N-terminal section; belongs to the precorrin-2 dehydrogenase / sirohydrochlorin ferrochelatase family. It in the C-terminal section; belongs to the precorrin methyltransferase family.

It carries out the reaction uroporphyrinogen III + 2 S-adenosyl-L-methionine = precorrin-2 + 2 S-adenosyl-L-homocysteine + H(+). The catalysed reaction is precorrin-2 + NAD(+) = sirohydrochlorin + NADH + 2 H(+). It catalyses the reaction siroheme + 2 H(+) = sirohydrochlorin + Fe(2+). It functions in the pathway cofactor biosynthesis; adenosylcobalamin biosynthesis; precorrin-2 from uroporphyrinogen III: step 1/1. Its pathway is cofactor biosynthesis; adenosylcobalamin biosynthesis; sirohydrochlorin from precorrin-2: step 1/1. It participates in porphyrin-containing compound metabolism; siroheme biosynthesis; precorrin-2 from uroporphyrinogen III: step 1/1. The protein operates within porphyrin-containing compound metabolism; siroheme biosynthesis; siroheme from sirohydrochlorin: step 1/1. It functions in the pathway porphyrin-containing compound metabolism; siroheme biosynthesis; sirohydrochlorin from precorrin-2: step 1/1. In terms of biological role, multifunctional enzyme that catalyzes the SAM-dependent methylations of uroporphyrinogen III at position C-2 and C-7 to form precorrin-2 via precorrin-1. Then it catalyzes the NAD-dependent ring dehydrogenation of precorrin-2 to yield sirohydrochlorin. Finally, it catalyzes the ferrochelation of sirohydrochlorin to yield siroheme. The protein is Siroheme synthase 1 of Pectobacterium atrosepticum (strain SCRI 1043 / ATCC BAA-672) (Erwinia carotovora subsp. atroseptica).